The sequence spans 239 residues: LexA repressor (239 aa).

The segment at residues 27 to 47 (FDEMKDALDLASKSGIHRLIT) is a DNA-binding region (H-T-H motif). Residues Ser159 and Lys197 each act as for autocatalytic cleavage activity in the active site.

This sequence belongs to the peptidase S24 family. Homodimer.

The catalysed reaction is Hydrolysis of Ala-|-Gly bond in repressor LexA.. Represses a number of genes involved in the response to DNA damage (SOS response), including recA and lexA. In the presence of single-stranded DNA, RecA interacts with LexA causing an autocatalytic cleavage which disrupts the DNA-binding part of LexA, leading to derepression of the SOS regulon and eventually DNA repair. The protein is LexA repressor of Rhizobium radiobacter (Agrobacterium tumefaciens).